The chain runs to 274 residues: Large ribosomal subunit protein uL2cz/uL2cy (274 aa).

2 disordered regions span residues Met-1–Gly-33 and Met-223–Asp-265.

The protein belongs to the universal ribosomal protein uL2 family. As to quaternary structure, part of the 50S ribosomal subunit.

Its subcellular location is the plastid. The protein localises to the chloroplast. The sequence is that of Large ribosomal subunit protein uL2cz/uL2cy (rpl2-A) from Pelargonium hortorum (Common geranium).